Consider the following 483-residue polypeptide: MFS-type transporter hepF (483 aa).

Residues 1 to 31 (METPAGKADRPRDHDSEQSQDNVVSWEGEDD) form a disordered region. Basic and acidic residues predominate over residues 7-17 (KADRPRDHDSE). A run of 11 helical transmembrane segments spans residues 89–109 (TIVVSIFVLGLAFGPLLAAPI), 124–144 (ILYTIFTVACGVSTNISMLIV), 147–167 (FFAGVTGSAPLTIGGGTVADL), 179–199 (FVTLGQAVAPAIGPVAGGFLT), 206–226 (WVFWLLTIVNGTITICQILFT), 276–296 (PISLIVALCCAVIYGILYVLV), 311–331 (IGISGLGYLGLGIGNLVGLWI), 357–377 (PMMILSGPVIAAGLFWYGWSV), 385–405 (MPIVGSGIVGLGNMFFFMPMV), 416–436 (AASAIAANAVLRSIGGAVLPL), and 448–468 (GWGNSILAFMALVFNPLLIAI).

Belongs to the major facilitator superfamily.

It localises to the cell membrane. Functionally, MFS-type transporter; part of the gene cluster that mediates the biosynthesis of heptelidic acid (HA), a sesquiterpene lactone that acts as an inhibitor of glyceraldehyde-3-phosphatedehydrogenase (GAPDH) and a growth inhibitor of the salt-tolerant lactic acid bacteria in soy sauce brewing. Might be required for efficient secretion of heptelidic acid. This chain is MFS-type transporter hepF (hepF), found in Aspergillus oryzae (strain ATCC 42149 / RIB 40) (Yellow koji mold).